Reading from the N-terminus, the 210-residue chain is Ribosomal RNA large subunit methyltransferase E (210 aa).

S-adenosyl-L-methionine-binding residues include glycine 64, tryptophan 66, aspartate 84, asparagine 100, and aspartate 125. Lysine 165 acts as the Proton acceptor in catalysis.

Belongs to the class I-like SAM-binding methyltransferase superfamily. RNA methyltransferase RlmE family.

The protein resides in the cytoplasm. It catalyses the reaction uridine(2552) in 23S rRNA + S-adenosyl-L-methionine = 2'-O-methyluridine(2552) in 23S rRNA + S-adenosyl-L-homocysteine + H(+). Functionally, specifically methylates the uridine in position 2552 of 23S rRNA at the 2'-O position of the ribose in the fully assembled 50S ribosomal subunit. The chain is Ribosomal RNA large subunit methyltransferase E from Buchnera aphidicola subsp. Baizongia pistaciae (strain Bp).